The chain runs to 220 residues: Small ribosomal subunit protein uS3 (220 aa).

In terms of domain architecture, KH type-2 spans 38–106; that stretch reads IRKYVKGRLK…RVHININEIK (69 aa).

It belongs to the universal ribosomal protein uS3 family. As to quaternary structure, part of the 30S ribosomal subunit. Forms a tight complex with proteins S10 and S14.

In terms of biological role, binds the lower part of the 30S subunit head. Binds mRNA in the 70S ribosome, positioning it for translation. The polypeptide is Small ribosomal subunit protein uS3 (Brevibacillus brevis (strain 47 / JCM 6285 / NBRC 100599)).